We begin with the raw amino-acid sequence, 324 residues long: NADH-ubiquinone oxidoreductase chain 1 (324 aa).

A run of 8 helical transmembrane segments spans residues 9 to 29 (LINP…LTLI), 75 to 95 (FLFL…WAPM), 106 to 126 (LGIL…LGSG), 146 to 166 (ISYE…SGGY), 177 to 197 (SIWL…STLA), 228 to 248 (LFFL…AVLF), 259 to 279 (ELTT…FLWV), and 299 to 319 (FLPL…ALAG).

It belongs to the complex I subunit 1 family.

Its subcellular location is the mitochondrion inner membrane. The catalysed reaction is a ubiquinone + NADH + 5 H(+)(in) = a ubiquinol + NAD(+) + 4 H(+)(out). In terms of biological role, core subunit of the mitochondrial membrane respiratory chain NADH dehydrogenase (Complex I) that is believed to belong to the minimal assembly required for catalysis. Complex I functions in the transfer of electrons from NADH to the respiratory chain. The immediate electron acceptor for the enzyme is believed to be ubiquinone. This chain is NADH-ubiquinone oxidoreductase chain 1 (MT-ND1), found in Cyprinus carpio (Common carp).